We begin with the raw amino-acid sequence, 105 residues long: MQYLAAYALVALSGKTPCKADVQAVLKAAGVAIELSRVDALFQELEGKSFDELMTEGRSKLVGSGSAAPAAAASTAGAAVAAAADAKKEASEEEADDDMGFGLFD.

This sequence belongs to the eukaryotic ribosomal protein P1/P2 family. As to quaternary structure, P1 and P2 exist as dimers at the large ribosomal subunit. Post-translationally, phosphorylated.

Functionally, plays an important role in the elongation step of protein synthesis. This Leishmania braziliensis protein is Large ribosomal subunit protein P2 (LIP2).